The chain runs to 123 residues: UPF0295 protein Bcer98_0460 (123 aa).

A run of 2 helical transmembrane segments spans residues 12–32 and 43–63; these read IRTF…LGVF and FMML…WIGM.

Belongs to the UPF0295 family.

The protein localises to the cell membrane. This Bacillus cytotoxicus (strain DSM 22905 / CIP 110041 / 391-98 / NVH 391-98) protein is UPF0295 protein Bcer98_0460.